The chain runs to 280 residues: Lacto-N-neotetraose biosynthesis glycosyltransferase LgtE (280 aa).

This sequence belongs to the glycosyltransferase 25 family.

It participates in glycan metabolism; lacto-N-neotetraose biosynthesis. The protein operates within bacterial outer membrane biogenesis; lipooligosaccharide biosynthesis. Adds the first galactose to the lacto-N-tetraose chain in lipooligosaccharide (LOS). This chain is Lacto-N-neotetraose biosynthesis glycosyltransferase LgtE (lgtE), found in Neisseria meningitidis serogroup B (strain ATCC BAA-335 / MC58).